A 228-amino-acid polypeptide reads, in one-letter code: Protein GrpE (228 aa).

Basic and acidic residues predominate over residues 1-22 (MDDKQKTNEEVKASSFDSEKSS). The tract at residues 1–71 (MDDKQKTNEE…DQTNTNNNEL (71 aa)) is disordered. Residues 38–53 (QNVQHDNGSNPAQKQN) show a composition bias toward polar residues.

Belongs to the GrpE family. Homodimer.

It is found in the cytoplasm. Functionally, participates actively in the response to hyperosmotic and heat shock by preventing the aggregation of stress-denatured proteins, in association with DnaK and GrpE. It is the nucleotide exchange factor for DnaK and may function as a thermosensor. Unfolded proteins bind initially to DnaJ; upon interaction with the DnaJ-bound protein, DnaK hydrolyzes its bound ATP, resulting in the formation of a stable complex. GrpE releases ADP from DnaK; ATP binding to DnaK triggers the release of the substrate protein, thus completing the reaction cycle. Several rounds of ATP-dependent interactions between DnaJ, DnaK and GrpE are required for fully efficient folding. The chain is Protein GrpE from Coprothermobacter proteolyticus (strain ATCC 35245 / DSM 5265 / OCM 4 / BT).